The sequence spans 510 residues: Bifunctional purine biosynthesis protein PurH (510 aa).

In terms of domain architecture, MGS-like spans 1–143 (MTKRALISVS…KNHSGVLVLV (143 aa)).

It belongs to the PurH family.

The enzyme catalyses (6R)-10-formyltetrahydrofolate + 5-amino-1-(5-phospho-beta-D-ribosyl)imidazole-4-carboxamide = 5-formamido-1-(5-phospho-D-ribosyl)imidazole-4-carboxamide + (6S)-5,6,7,8-tetrahydrofolate. It carries out the reaction IMP + H2O = 5-formamido-1-(5-phospho-D-ribosyl)imidazole-4-carboxamide. Its pathway is purine metabolism; IMP biosynthesis via de novo pathway; 5-formamido-1-(5-phospho-D-ribosyl)imidazole-4-carboxamide from 5-amino-1-(5-phospho-D-ribosyl)imidazole-4-carboxamide (10-formyl THF route): step 1/1. It functions in the pathway purine metabolism; IMP biosynthesis via de novo pathway; IMP from 5-formamido-1-(5-phospho-D-ribosyl)imidazole-4-carboxamide: step 1/1. This Deinococcus deserti (strain DSM 17065 / CIP 109153 / LMG 22923 / VCD115) protein is Bifunctional purine biosynthesis protein PurH.